The chain runs to 462 residues: MDAMQKTIEYTSVSRIAGPLMVIDGIEGIAYGEIVDITTPNGDKRTGQVLEAREEIAVVQVFEGTSELNTSETKVRFTGDTAKIGVSHDMLGRIFNGAGKPLDGGPEIIAEKKLDINGYPLNPVSRNPPNAFVQTGVSTIDGTNTLVRGQKIPIFSGSGLPHNKLATQIARQAKVRGEGEQFAVVFAAMGITGEESNYFMDEFKKTGALEKAVVFINLADDPAIERILTPRIALTTAEYLAYEKGMHVLVILTDLTNYCEALREIAAARNEVPGRRGYPGYMYTDLACLYERAGRVKGKEGTVTQIPILTMPDDDITHPIPDLTGYITEGQIVLSRELNRKGIYPPVDILPSLSRLAGNGQGEGKTRDDHSKVISQAYAAYAEGRGLRDLVAVVGEEALTERDRSFLKFADAFENSIVTQGVDEDRSIEETLDYIWGLLTILPREELKRVSDELIEKYLPKK.

It belongs to the ATPase alpha/beta chains family. Has multiple subunits with at least A(3), B(3), C, D, E, F, H, I and proteolipid K(x).

It is found in the cell membrane. Its function is as follows. Component of the A-type ATP synthase that produces ATP from ADP in the presence of a proton gradient across the membrane. The B chain is a regulatory subunit. The polypeptide is A-type ATP synthase subunit B (Methanococcus maripaludis (strain C5 / ATCC BAA-1333)).